Consider the following 506-residue polypeptide: Cytochrome P450 6a8 (506 aa).

A heme-binding site is contributed by cysteine 451.

Belongs to the cytochrome P450 family. Heme serves as cofactor.

Its subcellular location is the endoplasmic reticulum membrane. The protein resides in the microsome membrane. In terms of biological role, involved in the metabolism of insect hormones and in the breakdown of synthetic insecticides. In Drosophila melanogaster (Fruit fly), this protein is Cytochrome P450 6a8 (Cyp6a8).